Consider the following 311-residue polypeptide: MSATLPDIAVTEPSALHAPLRWVGMQDIAIPVRLDEAEPSGTVAARAQVQVDLPRPELKGIHMSRLYRLLDRHLEQPLSPAMLSQLLQAMIDSHADCGSRAARVSLAFEVMLRMPALRSEGLAGWRAYPVRIDAQSRAGRSEMRLQIDVLYASTCPCSAALSRQLLSKAFAQQHAGQTALRVEDVAQWLQRNGSYATPHSQRSVAQVRVDLVARVQSFDIRALVLLCESALATPVQAAVRRIDEQAFARLNGANLMYVEDAARRLRKELAERYASFHVAVRHFESLHAHDAVAETGSDADVFHMIAESHGQ.

The protein belongs to the GTP cyclohydrolase IV family.

The enzyme catalyses GTP + H2O = 7,8-dihydroneopterin 3'-triphosphate + formate + H(+). The protein operates within cofactor biosynthesis; 7,8-dihydroneopterin triphosphate biosynthesis; 7,8-dihydroneopterin triphosphate from GTP: step 1/1. In terms of biological role, converts GTP to 7,8-dihydroneopterin triphosphate. This is GTP cyclohydrolase FolE2 from Xanthomonas campestris pv. campestris (strain B100).